A 419-amino-acid polypeptide reads, in one-letter code: MHKLIIHGGTPLKGIINISGAKNAVLPIMAASILTDKLHITNVPKLTDVSTMKDLLRSHGADIEIIEHQDEFELIIDTKNINNFTADYEIVRKMRASIWVLGPLLTKYGKAKVSLPGGCAIGARQVDLHIAVLKAMGAEIEIEDGYINASSKGRLKGTHFVFDKVSVGATINAILAAVLAEGETMLFNCGREPEIVDLCNCLITMGADIAGIGTSEITIKGKDSLNKASYKVLSDRIEAGTYMFAAAITKGDVKICRIDYHIVENIALKLIETGIKVVPINNGVQVTYEGKLNSVDLETNPYPGFATDLQAQFMSLMTLSSGVSMITENIFENRFMHVPELCRMGADIVVRGNKAVVRGVEMLKGAEVMASDLRASVSLILAGLSTNSKTVLHRIYHLDRGFQDLEKKLSNCGADIKRV.

Phosphoenolpyruvate is bound at residue 22–23 (KN). Residue arginine 95 participates in UDP-N-acetyl-alpha-D-glucosamine binding. The active-site Proton donor is cysteine 119. Cysteine 119 carries the post-translational modification 2-(S-cysteinyl)pyruvic acid O-phosphothioketal. UDP-N-acetyl-alpha-D-glucosamine is bound by residues 164–167 (KVSV), aspartate 308, and isoleucine 330.

Belongs to the EPSP synthase family. MurA subfamily.

The protein localises to the cytoplasm. It catalyses the reaction phosphoenolpyruvate + UDP-N-acetyl-alpha-D-glucosamine = UDP-N-acetyl-3-O-(1-carboxyvinyl)-alpha-D-glucosamine + phosphate. It participates in cell wall biogenesis; peptidoglycan biosynthesis. In terms of biological role, cell wall formation. Adds enolpyruvyl to UDP-N-acetylglucosamine. This chain is UDP-N-acetylglucosamine 1-carboxyvinyltransferase, found in Rickettsia conorii (strain ATCC VR-613 / Malish 7).